A 1087-amino-acid chain; its full sequence is Transcription factor AP2-Z (1087 aa).

The segment at residues 586–682 (GRVYKVIVRG…IKYNSVPDSL (97 aa)) is a DNA-binding region (AP2).

Belongs to the AP2/ERF transcription factor family. AP2 subfamily.

Its subcellular location is the nucleus. It is found in the chromosome. Transcription factor which binds the 5'-[TC][AC]TG[AT]AC[AG]-3' motif. During the mosquito vector stage, plays an essential role in the zygote for de novo transcription of genes required for ookinete formation. This chain is Transcription factor AP2-Z, found in Plasmodium berghei (strain Anka).